The chain runs to 571 residues: E3 ubiquitin-protein ligase ipaH3 (571 aa).

Positions 1–260 (MSIMLPINNN…SQQTAQPDYH (260 aa)) are interaction with target proteins. LRR repeat units lie at residues 58-81 (INQF…LPPQ), 83-99 (TVLE…PELP), 100-119 (ASLE…PELP), 120-144 (ASLK…LLEY), 146-159 (NADN…PELP), 160-184 (TSLE…SLEA), 186-202 (DVST…PVRN), 205-229 (SEET…ILSL), and 232-260 (TCTI…PDYH). Residues 269–278 (SDGQQNTLHR) form a linker region. Positions 279–571 (PLADAVTAWF…SENGSQLHHS (293 aa)) constitute an NEL domain. The interval 279–571 (PLADAVTAWF…SENGSQLHHS (293 aa)) is E3 ubiquitin-protein ligase catalytic domain. Residue Cys363 is the Glycyl thioester intermediate of the active site.

It belongs to the LRR-containing bacterial E3 ligase family. In terms of processing, ubiquitinated in the presence of host E1 ubiquitin-activating enzyme, E2 ubiquitin-conjugating enzyme UBE2D3 and ubiquitin.

Its subcellular location is the secreted. It is found in the host cytoplasm. It catalyses the reaction S-ubiquitinyl-[E2 ubiquitin-conjugating enzyme]-L-cysteine + [acceptor protein]-L-lysine = [E2 ubiquitin-conjugating enzyme]-L-cysteine + N(6)-ubiquitinyl-[acceptor protein]-L-lysine.. Its function is as follows. Effector proteins function to alter host cell physiology and promote bacterial survival in host tissues. This protein is an E3 ubiquitin ligase that interferes with host's ubiquitination pathway. Synthesizes a 'Lys-48'-linked ubiquitin chain, which requires non-covalent binding between ubiquitin and the host ubiquitin-conjugating enzyme UBE2D1. The polypeptide is E3 ubiquitin-protein ligase ipaH3 (ipaH3) (Shigella flexneri).